Reading from the N-terminus, the 727-residue chain is Glucans biosynthesis glucosyltransferase H (727 aa).

A disordered region spans residues 18–38 (SAMPNERPGAMEPQNLSKMPE). A run of 7 helical transmembrane segments spans residues 58–78 (FLVV…MGAV), 97–117 (VNFC…LILL), 278–298 (LQQF…GWWV), 408–428 (IMAY…LMLA), 460–480 (LFYI…LLLL), 496–516 (IFSV…MMFI), and 572–592 (LLAW…ISAW).

The protein belongs to the glycosyltransferase 2 family. OpgH subfamily.

The protein resides in the cell inner membrane. It functions in the pathway glycan metabolism; osmoregulated periplasmic glucan (OPG) biosynthesis. In terms of biological role, involved in the biosynthesis of osmoregulated periplasmic glucans (OPGs). This Shewanella baltica (strain OS223) protein is Glucans biosynthesis glucosyltransferase H.